The primary structure comprises 388 residues: N5-carboxyaminoimidazole ribonucleotide synthase (388 aa).

ATP contacts are provided by residues Lys-105, Lys-140, Glu-174–Val-177, Glu-182, and Asn-267–Glu-268. An ATP-grasp domain is found at Arg-109 to Thr-297.

It belongs to the PurK/PurT family. In terms of assembly, homodimer.

It carries out the reaction 5-amino-1-(5-phospho-beta-D-ribosyl)imidazole + hydrogencarbonate + ATP = 5-carboxyamino-1-(5-phospho-D-ribosyl)imidazole + ADP + phosphate + 2 H(+). The protein operates within purine metabolism; IMP biosynthesis via de novo pathway; 5-amino-1-(5-phospho-D-ribosyl)imidazole-4-carboxylate from 5-amino-1-(5-phospho-D-ribosyl)imidazole (N5-CAIR route): step 1/2. In terms of biological role, catalyzes the ATP-dependent conversion of 5-aminoimidazole ribonucleotide (AIR) and HCO(3)(-) to N5-carboxyaminoimidazole ribonucleotide (N5-CAIR). In Synechocystis sp. (strain ATCC 27184 / PCC 6803 / Kazusa), this protein is N5-carboxyaminoimidazole ribonucleotide synthase.